A 454-amino-acid polypeptide reads, in one-letter code: uncharacterized protein (454 aa).

Residues 422 to 454 (EWLPPAHLDHGQPRTNSYFHPEKLLHDSDEDDP) are disordered.

This sequence belongs to the Rv1128c/1148c/1588c/1702c/1945/3466 family.

This is an uncharacterized protein from Mycobacterium tuberculosis (strain CDC 1551 / Oshkosh).